We begin with the raw amino-acid sequence, 134 residues long: Phosphoribosyl-AMP cyclohydrolase (134 aa).

Position 93 (Asp-93) interacts with Mg(2+). Residue Cys-94 coordinates Zn(2+). Mg(2+)-binding residues include Asp-95 and Asp-97. Zn(2+)-binding residues include Cys-112 and Cys-119.

It belongs to the PRA-CH family. Homodimer. Mg(2+) serves as cofactor. The cofactor is Zn(2+).

The protein localises to the cytoplasm. The catalysed reaction is 1-(5-phospho-beta-D-ribosyl)-5'-AMP + H2O = 1-(5-phospho-beta-D-ribosyl)-5-[(5-phospho-beta-D-ribosylamino)methylideneamino]imidazole-4-carboxamide. It participates in amino-acid biosynthesis; L-histidine biosynthesis; L-histidine from 5-phospho-alpha-D-ribose 1-diphosphate: step 3/9. In terms of biological role, catalyzes the hydrolysis of the adenine ring of phosphoribosyl-AMP. The protein is Phosphoribosyl-AMP cyclohydrolase of Caulobacter sp. (strain K31).